Here is a 69-residue protein sequence, read N- to C-terminus: Large ribosomal subunit protein eL38z/eL38y (69 aa).

The protein belongs to the eukaryotic ribosomal protein eL38 family.

In Arabidopsis thaliana (Mouse-ear cress), this protein is Large ribosomal subunit protein eL38z/eL38y (RPL38A).